Here is a 238-residue protein sequence, read N- to C-terminus: Ribosomal RNA small subunit methyltransferase G (238 aa).

S-adenosyl-L-methionine contacts are provided by residues G78, 129–130 (AE), and R148.

This sequence belongs to the methyltransferase superfamily. RNA methyltransferase RsmG family.

It is found in the cytoplasm. Specifically methylates the N7 position of a guanine in 16S rRNA. In Caldicellulosiruptor bescii (strain ATCC BAA-1888 / DSM 6725 / KCTC 15123 / Z-1320) (Anaerocellum thermophilum), this protein is Ribosomal RNA small subunit methyltransferase G.